A 240-amino-acid chain; its full sequence is ATP synthase subunit a (240 aa).

5 consecutive transmembrane segments (helical) span residues 21–41 (LSNL…CVWG), 78–98 (IFLP…LIGV), 116–136 (DAVM…YYGI), 183–203 (ILLS…FGAA), and 212–232 (FSVF…MVYM).

The protein belongs to the ATPase A chain family. F-type ATPases have 2 components, CF(1) - the catalytic core - and CF(0) - the membrane proton channel. CF(1) has five subunits: alpha(3), beta(3), gamma(1), delta(1), epsilon(1). CF(0) has three main subunits: a(1), b(2) and c(9-12). The alpha and beta chains form an alternating ring which encloses part of the gamma chain. CF(1) is attached to CF(0) by a central stalk formed by the gamma and epsilon chains, while a peripheral stalk is formed by the delta and b chains.

The protein localises to the cell membrane. In terms of biological role, key component of the proton channel; it plays a direct role in the translocation of protons across the membrane. This chain is ATP synthase subunit a, found in Oceanobacillus iheyensis (strain DSM 14371 / CIP 107618 / JCM 11309 / KCTC 3954 / HTE831).